An 83-amino-acid chain; its full sequence is Small integral membrane protein 10 (83 aa).

Residues 64–82 (FFYFYILASVILNVHLQVY) form a helical membrane-spanning segment.

It localises to the membrane. In Homo sapiens (Human), this protein is Small integral membrane protein 10 (SMIM10).